The following is a 476-amino-acid chain: Siroheme synthase (476 aa).

The precorrin-2 dehydrogenase /sirohydrochlorin ferrochelatase stretch occupies residues 1–204 (MDYFPVFLNI…GKDQAAQDYL (204 aa)). Residues 22 to 23 (SV) and 43 to 44 (PT) each bind NAD(+). At serine 129 the chain carries Phosphoserine. The tract at residues 218 to 476 (GEVYLVGAGP…GNTPGYSKHP (259 aa)) is uroporphyrinogen-III C-methyltransferase. Residue proline 227 coordinates S-adenosyl-L-methionine. Aspartate 250 (proton acceptor) is an active-site residue. Lysine 272 functions as the Proton donor in the catalytic mechanism. Residues 303-305 (GGD), isoleucine 308, 333-334 (TA), methionine 385, and glycine 414 each bind S-adenosyl-L-methionine.

This sequence in the N-terminal section; belongs to the precorrin-2 dehydrogenase / sirohydrochlorin ferrochelatase family. It in the C-terminal section; belongs to the precorrin methyltransferase family.

The catalysed reaction is uroporphyrinogen III + 2 S-adenosyl-L-methionine = precorrin-2 + 2 S-adenosyl-L-homocysteine + H(+). The enzyme catalyses precorrin-2 + NAD(+) = sirohydrochlorin + NADH + 2 H(+). It catalyses the reaction siroheme + 2 H(+) = sirohydrochlorin + Fe(2+). It participates in cofactor biosynthesis; adenosylcobalamin biosynthesis; precorrin-2 from uroporphyrinogen III: step 1/1. The protein operates within cofactor biosynthesis; adenosylcobalamin biosynthesis; sirohydrochlorin from precorrin-2: step 1/1. Its pathway is porphyrin-containing compound metabolism; siroheme biosynthesis; precorrin-2 from uroporphyrinogen III: step 1/1. It functions in the pathway porphyrin-containing compound metabolism; siroheme biosynthesis; siroheme from sirohydrochlorin: step 1/1. It participates in porphyrin-containing compound metabolism; siroheme biosynthesis; sirohydrochlorin from precorrin-2: step 1/1. In terms of biological role, multifunctional enzyme that catalyzes the SAM-dependent methylations of uroporphyrinogen III at position C-2 and C-7 to form precorrin-2 via precorrin-1. Then it catalyzes the NAD-dependent ring dehydrogenation of precorrin-2 to yield sirohydrochlorin. Finally, it catalyzes the ferrochelation of sirohydrochlorin to yield siroheme. This chain is Siroheme synthase, found in Nitrosomonas eutropha (strain DSM 101675 / C91 / Nm57).